Here is a 237-residue protein sequence, read N- to C-terminus: Ribonuclease PH (237 aa).

Phosphate contacts are provided by residues Arg-86 and 124 to 126 (GTR).

The protein belongs to the RNase PH family. In terms of assembly, homohexameric ring arranged as a trimer of dimers.

The catalysed reaction is tRNA(n+1) + phosphate = tRNA(n) + a ribonucleoside 5'-diphosphate. Functionally, phosphorolytic 3'-5' exoribonuclease that plays an important role in tRNA 3'-end maturation. Removes nucleotide residues following the 3'-CCA terminus of tRNAs; can also add nucleotides to the ends of RNA molecules by using nucleoside diphosphates as substrates, but this may not be physiologically important. Probably plays a role in initiation of 16S rRNA degradation (leading to ribosome degradation) during starvation. The polypeptide is Ribonuclease PH (Shewanella sp. (strain W3-18-1)).